The following is a 71-amino-acid chain: Exodeoxyribonuclease 7 small subunit (71 aa).

It belongs to the XseB family. As to quaternary structure, heterooligomer composed of large and small subunits.

It is found in the cytoplasm. It catalyses the reaction Exonucleolytic cleavage in either 5'- to 3'- or 3'- to 5'-direction to yield nucleoside 5'-phosphates.. In terms of biological role, bidirectionally degrades single-stranded DNA into large acid-insoluble oligonucleotides, which are then degraded further into small acid-soluble oligonucleotides. This is Exodeoxyribonuclease 7 small subunit from Streptococcus equi subsp. equi (strain 4047).